The chain runs to 274 residues: 2,3,4,5-tetrahydropyridine-2,6-dicarboxylate N-succinyltransferase (274 aa).

It belongs to the transferase hexapeptide repeat family.

It localises to the cytoplasm. The enzyme catalyses (S)-2,3,4,5-tetrahydrodipicolinate + succinyl-CoA + H2O = (S)-2-succinylamino-6-oxoheptanedioate + CoA. It participates in amino-acid biosynthesis; L-lysine biosynthesis via DAP pathway; LL-2,6-diaminopimelate from (S)-tetrahydrodipicolinate (succinylase route): step 1/3. The sequence is that of 2,3,4,5-tetrahydropyridine-2,6-dicarboxylate N-succinyltransferase from Alteromonas mediterranea (strain DSM 17117 / CIP 110805 / LMG 28347 / Deep ecotype).